The chain runs to 594 residues: UvrABC system protein C (594 aa).

Positions 13–99 (NSSGVYQYFD…IKQLKPKYNI (87 aa)) constitute a GIY-YIG domain. The UVR domain maps to 205-240 (DRLIKELELKMERLSSNLRFEEALIYRDRIAKIQKI).

Belongs to the UvrC family. Interacts with UvrB in an incision complex.

The protein localises to the cytoplasm. Functionally, the UvrABC repair system catalyzes the recognition and processing of DNA lesions. UvrC both incises the 5' and 3' sides of the lesion. The N-terminal half is responsible for the 3' incision and the C-terminal half is responsible for the 5' incision. This Helicobacter pylori (strain G27) protein is UvrABC system protein C.